A 354-amino-acid chain; its full sequence is MEKFKAAMLLAGTGDALGYKNFSWVFCASGVKIQEELKQLGGLENLVLSIDGWPVSNNTLMHIATAESLVSDYWSIEDLYRDMVKRYIDVVDKLQGRRPDPATIEGCAHLKPDNYLLAWHTPFNEKGSGFGAATKAMCIGMRYWKPGRLETLIEVSIESGRMTHNHPTGFLGSLCTALFTSYAIQEKPLAQWGREMLKLLPMAEEYCKKTIRHMAEYQEHWFYFEAKWQFYLEEREIAEENENKPKFPDKYDAEERDKAYKTWSSEGRGGRRGHDAPMIAYDALLGAGGDWKELCNRAMFHGGEGGATGSIAGCLYGLLYGISKVPKSLYQQLEMKERLENLGEKLYHLATMEK.

The protein belongs to the ADP-ribosylglycohydrolase family. In terms of tissue distribution, expressed in heart (at protein level). A short form is detected in both heart and tadpole tail (at protein level).

The protein localises to the cytoplasm. Its subcellular location is the myofibril. The protein resides in the sarcomere. In terms of biological role, required for myofibril assembly and outgrowth of the cardiac chambers in the developing heart. Appears to be catalytically inactive, showing no activity against O-acetyl-ADP-ribose. The protein is Inactive ADP-ribosyltransferase arh2 (adprhl1) of Xenopus laevis (African clawed frog).